A 575-amino-acid polypeptide reads, in one-letter code: Cytokinin dehydrogenase 1 (575 aa).

A signal peptide spans 1–31 (MGLTSSLRFHRQNNKTFLGIFMILVLSCIPG). N-linked (GlcNAc...) asparagine glycosylation is found at Asn-14, Asn-38, and Asn-115. An FAD-binding PCMH-type domain is found at 84–262 (YQLPPLAILH…TRARISLEPA (179 aa)). FAD-binding residues include Ala-120, Gly-122, and Gly-124. His-125 carries the pros-8alpha-FAD histidine modification. Ser-126, Gln-130, Asp-186, Thr-191, Ser-197, Ile-201, and Ile-252 together coordinate FAD. Asn-303, Asn-318, Asn-437, and Asn-467 each carry an N-linked (GlcNAc...) asparagine glycan. FAD-binding residues include Tyr-498 and Gln-536.

This sequence belongs to the oxygen-dependent FAD-linked oxidoreductase family. The cofactor is FAD. In terms of tissue distribution, expressed in shoot apexes, lateral shoot meristems, growing tissues of young flowers, and weakly at the root-hypocotyl junction.

The protein resides in the vacuole. The enzyme catalyses N(6)-dimethylallyladenine + A + H2O = 3-methyl-2-butenal + adenine + AH2. Its function is as follows. Catalyzes the oxidation of cytokinins, a family of N(6)-substituted adenine derivatives that are plant hormones, where the substituent is an isopentenyl group. Catalyzes in vitro the oxidation of various types of cytokinin nucleotides that are known as direct products of cytokinin biosynthesis. Promotes adventitious root initiation downstream of MYC2-dependent jasmonate signaling. Cytokinin degraded by CKX1 is required for cell division in the female gametophyte by modulating the expression of cell cycle genes. In Arabidopsis thaliana (Mouse-ear cress), this protein is Cytokinin dehydrogenase 1 (CKX1).